The primary structure comprises 283 residues: Non-selective voltage-gated ion channel VDAC1 (283 aa).

The residue at position 2 (A2) is an N-acetylalanine. K12 contacts ATP. K12 participates in a covalent cross-link: Glycyl lysine isopeptide (Lys-Gly) (interchain with G-Cter in ubiquitin). A Phosphoserine modification is found at S13. T19 carries the post-translational modification Phosphothreonine. Position 20 (K20) interacts with ATP. K20 is modified (N6-acetyllysine; alternate). At K20 the chain carries N6-succinyllysine; alternate. Residue K20 forms a Glycyl lysine isopeptide (Lys-Gly) (interchain with G-Cter in ubiquitin); alternate linkage. The next 2 membrane-spanning stretches (beta stranded) occupy residues 26 to 35 and 39 to 47; these read LIKLDLKTKS and LEFTSSGSA. Glycyl lysine isopeptide (Lys-Gly) (interchain with G-Cter in ubiquitin) cross-links involve residues K53 and K61. A beta stranded membrane pass occupies residues 54–64; it reads VTGSLETKYRW. A Phosphotyrosine modification is found at Y67. Beta stranded transmembrane passes span 69 to 76, 80 to 89, and 95 to 104; these read LTFTEKWN, TLGTEITVED, and LKLTFDSSFS. Position 107 is a phosphothreonine (T107). The residue at position 109 (K109) is an N6-acetyllysine; alternate. Residue K109 forms a Glycyl lysine isopeptide (Lys-Gly) (interchain with G-Cter in ubiquitin); alternate linkage. K110 participates in a covalent cross-link: Glycyl lysine isopeptide (Lys-Gly) (interchain with G-Cter in ubiquitin). 4 beta stranded membrane-spanning segments follow: residues 111 to 120, 123 to 130, 137 to 145, and 150 to 158; these read NAKIKTGYKR, INLGCDMD, SIRGALVLG, and LAGYQMNFE. K161 is covalently cross-linked (Glycyl lysine isopeptide (Lys-Gly) (interchain with G-Cter in ubiquitin)). The next 6 beta stranded transmembrane spans lie at 163–175, 178–185, 189–198, 202–211, 218–227, and 231–238; these read RVTQSNFAVGYKT, FQLHTNVN, EFGGSIYQKV, LETAVNLAWT, RFGIAAKYQI, and ACFSAKVN. S193 bears the Phosphoserine; by NEK1 mark. Residue S240 is modified to Phosphoserine. 242–244 contributes to the NAD(+) binding site; it reads LIG. A beta stranded transmembrane segment spans residues 242 to 251; the sequence is LIGLGYTQTL. The residue at position 252 (K252) is an N6-acetyllysine. A beta stranded transmembrane segment spans residues 254 to 263; the sequence is GIKLTLSALL. 260 to 264 contributes to the NAD(+) binding site; that stretch reads SALLD. K266 bears the N6-acetyllysine; alternate mark. K266 participates in a covalent cross-link: Glycyl lysine isopeptide (Lys-Gly) (interchain with G-Cter in ubiquitin); alternate. A beta stranded transmembrane segment spans residues 273–282; that stretch reads HKLGLGLEFQ. Residue K274 forms a Glycyl lysine isopeptide (Lys-Gly) (interchain with G-Cter in ubiquitin) linkage.

Belongs to the eukaryotic mitochondrial porin family. Homodimer and homotrimer; in response to cyclic AMP or calcium; oligomerization is required for scramblase activity. Component of the mitochondrial permeability transition pore complex (mPTPC), at least composed of SPG7, VDAC1 and PPIF. Interacts with SPG7, NIPSNAP2 and SLC25A30. Interacts with hexokinases including HK1. The HK1-VDAC1 complex interacts with ATF2. Interacts with BCL2L1. Interacts with BAK1. Interacts with RTL10/BOP (via BH3 domain). Interacts with amyloid-beta and APP; induces VDAC1 dephosphorylation. Interacts with TMEM41B. Interacts with BCAP31. Interacts with HSPA9; this interaction couples ITPR1 to VDAC1. As to quaternary structure, (Microbial infection) Interacts with influenza A virus PB1-F2 protein. Phosphorylation at Ser-193 by NEK1 promotes the closed conformational state preventing excessive mitochondrial membrane permeability and subsequent apoptotic cell death after injury. Phosphorylation by the AKT-GSK3B axis stabilizes the protein probably by preventing ubiquitin-mediated proteasomal degradation. In terms of processing, ubiquitinated. Undergoes monoubiquitination and polyubiquitination by PRKN; monoubiquitination at Lys-274 inhibits apoptosis, whereas polyubiquitination leads to its degradation and promotes mitophagy. Deubiquitinated by USP30. In terms of tissue distribution, expressed in erythrocytes (at protein level). Expressed in heart, liver and skeletal muscle.

It is found in the mitochondrion outer membrane. The protein resides in the cell membrane. The protein localises to the membrane raft. The enzyme catalyses chloride(in) = chloride(out). It carries out the reaction K(+)(in) = K(+)(out). The catalysed reaction is ATP(in) = ATP(out). It catalyses the reaction Ca(2+)(in) = Ca(2+)(out). The enzyme catalyses Na(+)(in) = Na(+)(out). It carries out the reaction Mg(2+)(in) = Mg(2+)(out). The catalysed reaction is L-glutamate(out) = L-glutamate(in). It catalyses the reaction dopamine(out) = dopamine(in). The enzyme catalyses acetylcholine(in) = acetylcholine(out). It carries out the reaction Fe(III)-[cytochrome c](out) = Fe(III)-[cytochrome c](in). The catalysed reaction is a 1,2-diacyl-sn-glycero-3-phosphocholine(in) = a 1,2-diacyl-sn-glycero-3-phosphocholine(out). It catalyses the reaction a 1,2-diacyl-sn-glycero-3-phospho-L-serine(in) = a 1,2-diacyl-sn-glycero-3-phospho-L-serine(out). With respect to regulation, inhibited by nitric oxide. In terms of biological role, non-selective voltage-gated ion channel that mediates the transport of anions and cations through the mitochondrion outer membrane and plasma membrane. The channel at the outer mitochondrial membrane allows diffusion of small hydrophilic molecules; in the plasma membrane it is involved in cell volume regulation and apoptosis. It adopts an open conformation at low or zero membrane potential and a closed conformation at potentials above 30-40 mV. The open state has a weak anion selectivity whereas the closed state is cation-selective. Binds various signaling molecules, including the sphingolipid ceramide, the phospholipid phosphatidylcholine, and the sterols cholesterol and oxysterol. In depolarized mitochondria, acts downstream of PRKN and PINK1 to promote mitophagy or prevent apoptosis; polyubiquitination by PRKN promotes mitophagy, while monoubiquitination by PRKN decreases mitochondrial calcium influx which ultimately inhibits apoptosis. May participate in the formation of the permeability transition pore complex (PTPC) responsible for the release of mitochondrial products that triggers apoptosis. May mediate ATP export from cells. Part of a complex composed of HSPA9, ITPR1 and VDAC1 that regulates mitochondrial calcium-dependent apoptosis by facilitating calcium transport from the ER lumen to the mitochondria intermembrane space thus providing calcium for the downstream calcium channel MCU that directly releases it into mitochondria matrix. Mediates cytochrome c efflux. Its function is as follows. Catalyzes the scrambling of phospholipids across the outer mitochondrial membrane; the mechanism is unrelated to channel activity and is capable of translocating both anionic and zwitterionic phospholipids. The polypeptide is Non-selective voltage-gated ion channel VDAC1 (Homo sapiens (Human)).